A 442-amino-acid chain; its full sequence is UDP-glucosyltransferase 29 (442 aa).

Catalysis depends on H20, which acts as the Proton acceptor. H20 is an an anthocyanidin binding site. D116 functions as the Charge relay in the catalytic mechanism. The UDP-alpha-D-glucose site is built by T138, A318, Q320, H335, W338, S340, E343, D359, and Q360.

Belongs to the UDP-glycosyltransferase family. In terms of tissue distribution, expressed at higher levels in roots than in leaves.

It catalyses the reaction (20S)-ginsenoside F2 + UDP-alpha-D-glucose = (20S)-ginsenoside Rd + UDP + H(+). The catalysed reaction is (20S)-ginsenoside Rh2 + UDP-alpha-D-glucose = (20S)-ginsenoside Rg3 + UDP + H(+). It functions in the pathway secondary metabolite biosynthesis; terpenoid biosynthesis. Functionally, component of the dammarane-type triterpene saponins (e.g. PPD-type ginsenosides or panaxosides) biosynthetic pathway. Glycosyltransferase that catalyzes the conversion of ginsenoside Rh2 to ginsenoside Rg3. Triggers the biosynthesis of ginsenoside Rd from ginsenoside F2. This chain is UDP-glucosyltransferase 29, found in Panax ginseng (Korean ginseng).